The chain runs to 162 residues: Putative pre-16S rRNA nuclease (162 aa).

The protein belongs to the YqgF nuclease family.

Its subcellular location is the cytoplasm. In terms of biological role, could be a nuclease involved in processing of the 5'-end of pre-16S rRNA. The polypeptide is Putative pre-16S rRNA nuclease (Brucella melitensis biotype 1 (strain ATCC 23456 / CCUG 17765 / NCTC 10094 / 16M)).